Reading from the N-terminus, the 280-residue chain is 2-C-methyl-D-erythritol 4-phosphate cytidylyltransferase (280 aa).

This sequence belongs to the IspD/TarI cytidylyltransferase family. IspD subfamily.

It carries out the reaction 2-C-methyl-D-erythritol 4-phosphate + CTP + H(+) = 4-CDP-2-C-methyl-D-erythritol + diphosphate. Its pathway is isoprenoid biosynthesis; isopentenyl diphosphate biosynthesis via DXP pathway; isopentenyl diphosphate from 1-deoxy-D-xylulose 5-phosphate: step 2/6. Functionally, catalyzes the formation of 4-diphosphocytidyl-2-C-methyl-D-erythritol from CTP and 2-C-methyl-D-erythritol 4-phosphate (MEP). This is 2-C-methyl-D-erythritol 4-phosphate cytidylyltransferase from Psychrobacter cryohalolentis (strain ATCC BAA-1226 / DSM 17306 / VKM B-2378 / K5).